Consider the following 343-residue polypeptide: NADH-quinone oxidoreductase subunit H (343 aa).

The next 8 helical transmembrane spans lie at 5-25, 76-96, 119-139, 158-178, 190-210, 243-263, 284-304, and 323-343; these read FIIEKSVVIVAVFALTMLMAM, FLFVVGPAIAMSTALMTSAVI, ALLYIFAVVSVGVYGIMIGGW, VSYEVAMGLSMIALLMMTGTL, MNWNVFYQPVSFLIFLICAFA, LFAEYANMFISSAILAILFFG, ILGFLALFIKICGFIFFYMWV, and ILIPLAILNIMVTGICLLLFK.

The protein belongs to the complex I subunit 1 family. As to quaternary structure, NDH-1 is composed of 14 different subunits. Subunits NuoA, H, J, K, L, M, N constitute the membrane sector of the complex.

It localises to the cell inner membrane. It carries out the reaction a quinone + NADH + 5 H(+)(in) = a quinol + NAD(+) + 4 H(+)(out). Its function is as follows. NDH-1 shuttles electrons from NADH, via FMN and iron-sulfur (Fe-S) centers, to quinones in the respiratory chain. The immediate electron acceptor for the enzyme in this species is believed to be ubiquinone. Couples the redox reaction to proton translocation (for every two electrons transferred, four hydrogen ions are translocated across the cytoplasmic membrane), and thus conserves the redox energy in a proton gradient. This subunit may bind ubiquinone. In Flavobacterium psychrophilum (strain ATCC 49511 / DSM 21280 / CIP 103535 / JIP02/86), this protein is NADH-quinone oxidoreductase subunit H.